The following is a 396-amino-acid chain: Elongation factor Tu (396 aa).

One can recognise a tr-type G domain in the interval 10 to 205 (KPHVNIGTIG…ACDESIPDPE (196 aa)). Residues 19-26 (GHVDHGKT) are G1. 19 to 26 (GHVDHGKT) is a GTP binding site. Threonine 26 is a Mg(2+) binding site. A G2 region spans residues 62-66 (GITIN). The segment at 83–86 (DAPG) is G3. GTP contacts are provided by residues 83 to 87 (DAPGH) and 138 to 141 (NKCD). The G4 stretch occupies residues 138 to 141 (NKCD). A G5 region spans residues 175–177 (SAL).

Belongs to the TRAFAC class translation factor GTPase superfamily. Classic translation factor GTPase family. EF-Tu/EF-1A subfamily. As to quaternary structure, monomer.

The protein resides in the cytoplasm. It carries out the reaction GTP + H2O = GDP + phosphate + H(+). Functionally, GTP hydrolase that promotes the GTP-dependent binding of aminoacyl-tRNA to the A-site of ribosomes during protein biosynthesis. The protein is Elongation factor Tu of Corynebacterium jeikeium (strain K411).